We begin with the raw amino-acid sequence, 304 residues long: Ribonuclease Z (304 aa).

His63, His65, Asp67, His68, His143, Asp213, and His271 together coordinate Zn(2+). The active-site Proton acceptor is the Asp67.

This sequence belongs to the RNase Z family. As to quaternary structure, homodimer. Requires Zn(2+) as cofactor.

It catalyses the reaction Endonucleolytic cleavage of RNA, removing extra 3' nucleotides from tRNA precursor, generating 3' termini of tRNAs. A 3'-hydroxy group is left at the tRNA terminus and a 5'-phosphoryl group is left at the trailer molecule.. In terms of biological role, zinc phosphodiesterase, which displays some tRNA 3'-processing endonuclease activity. Probably involved in tRNA maturation, by removing a 3'-trailer from precursor tRNA. The polypeptide is Ribonuclease Z (Bacteroides fragilis (strain ATCC 25285 / DSM 2151 / CCUG 4856 / JCM 11019 / LMG 10263 / NCTC 9343 / Onslow / VPI 2553 / EN-2)).